Reading from the N-terminus, the 65-residue chain is Cold shock-like protein CspC (65 aa).

The region spanning 3 to 62 (GRVKWFNAEKGFGFIEREDGDDVFVHFSAIQQDGYKSLEEGQQVEFDIVDGARGPQAANV) is the CSD domain.

Homodimer.

Its subcellular location is the cytoplasm. The sequence is that of Cold shock-like protein CspC (cspC) from Bacillus cereus.